The primary structure comprises 217 residues: ATP phosphoribosyltransferase (217 aa).

The protein belongs to the ATP phosphoribosyltransferase family. Short subfamily. Heteromultimer composed of HisG and HisZ subunits.

It is found in the cytoplasm. The catalysed reaction is 1-(5-phospho-beta-D-ribosyl)-ATP + diphosphate = 5-phospho-alpha-D-ribose 1-diphosphate + ATP. The protein operates within amino-acid biosynthesis; L-histidine biosynthesis; L-histidine from 5-phospho-alpha-D-ribose 1-diphosphate: step 1/9. In terms of biological role, catalyzes the condensation of ATP and 5-phosphoribose 1-diphosphate to form N'-(5'-phosphoribosyl)-ATP (PR-ATP). Has a crucial role in the pathway because the rate of histidine biosynthesis seems to be controlled primarily by regulation of HisG enzymatic activity. The protein is ATP phosphoribosyltransferase of Burkholderia vietnamiensis (strain G4 / LMG 22486) (Burkholderia cepacia (strain R1808)).